The following is a 154-amino-acid chain: Transcriptional repressor NrdR (154 aa).

The segment at 3–34 is a zinc-finger region; the sequence is CPFCRHPDSRVIDSRETDEGQAIRRRRSCPEC. In terms of domain architecture, ATP-cone spans 46 to 136; it reads LAVVKRSGVT…VYRSFSSADD (91 aa).

It belongs to the NrdR family. Zn(2+) is required as a cofactor.

Its function is as follows. Negatively regulates transcription of bacterial ribonucleotide reductase nrd genes and operons by binding to NrdR-boxes. This Mycobacterium bovis (strain ATCC BAA-935 / AF2122/97) protein is Transcriptional repressor NrdR.